The sequence spans 181 residues: Ribosome maturation factor RimM (181 aa).

The PRC barrel domain maps to 97–170; it reads AGEFWLPDLM…RIEVVAIPGL (74 aa).

Belongs to the RimM family. In terms of assembly, binds ribosomal protein uS19.

It is found in the cytoplasm. An accessory protein needed during the final step in the assembly of 30S ribosomal subunit, possibly for assembly of the head region. Essential for efficient processing of 16S rRNA. May be needed both before and after RbfA during the maturation of 16S rRNA. It has affinity for free ribosomal 30S subunits but not for 70S ribosomes. The polypeptide is Ribosome maturation factor RimM (Gloeobacter violaceus (strain ATCC 29082 / PCC 7421)).